The primary structure comprises 76 residues: DNA-directed RNA polymerase subunit epsilon (76 aa).

The protein belongs to the RNA polymerase subunit epsilon family. As to quaternary structure, RNAP is composed of a core of 2 alpha, a beta and a beta' subunit. The core is associated with a delta subunit, and at least one of epsilon or omega. When a sigma factor is associated with the core the holoenzyme is formed, which can initiate transcription.

It catalyses the reaction RNA(n) + a ribonucleoside 5'-triphosphate = RNA(n+1) + diphosphate. A non-essential component of RNA polymerase (RNAP). The polypeptide is DNA-directed RNA polymerase subunit epsilon (Lactococcus lactis subsp. lactis (strain IL1403) (Streptococcus lactis)).